A 576-amino-acid polypeptide reads, in one-letter code: (+)-alpha-terpineol synthase (576 aa).

Positions 286, 323, 327, 466, and 469 each coordinate (2E)-geranyl diphosphate. Residues Asp323 and Asp327 each coordinate Mg(2+). The DDXXD motif motif lies at 323-327 (DDVYD). The Mg(2+) site is built by Asn469, Thr473, and Glu477.

The protein belongs to the terpene synthase family. Tpsb subfamily. It depends on Mg(2+) as a cofactor. Mn(2+) serves as cofactor.

It carries out the reaction (2E)-geranyl diphosphate + H2O = (R)-alpha-terpineol + diphosphate. Its function is as follows. Monoterpene synthase producing mainly (+)-alpha-terpineol (44%) and (-)-limonene (33.6%) and lower amounts of (E)-geraniol (5.9%), linalool (5.0%), myrcene (3.4%), (-)-alpha-pinene (3.3%), (+)-sabinene (3.0%) and alpha-terpinolene (1.6%). This chain is (+)-alpha-terpineol synthase, found in Santalum album (White sandalwood).